The sequence spans 34 residues: Non-toxic venom protein (34 aa).

Residues 1-34 (KEGYPTNSEGCKITXLFNDPYCKGXCINLSTQAD) form the LCN-type CS-alpha/beta domain.

As to expression, expressed by the venom gland.

The protein resides in the secreted. Does not cause symptoms of intoxication, paralysis or death in insects (A.domestica). This Rhopalurus junceus (Caribbean blue scorpion) protein is Non-toxic venom protein.